A 396-amino-acid chain; its full sequence is Na(+)/H(+) antiporter NhaA 1 (396 aa).

11 consecutive transmembrane segments (helical) span residues 18–38 (LLLI…LSWL), 60–80 (LLLW…GLEV), 95–115 (IALP…IYTG), 126–146 (GWAI…ALLG), 155–175 (LFLL…IALF), 178–198 (ADLS…LFIL), 201–221 (TGVT…ICVL), 262–282 (VAYG…LAGI), 295–315 (IAAG…WIGV), 333–353 (GMAV…TLAL), and 362–382 (AARL…YYLL).

Belongs to the NhaA Na(+)/H(+) (TC 2.A.33) antiporter family.

The protein resides in the cell inner membrane. The catalysed reaction is Na(+)(in) + 2 H(+)(out) = Na(+)(out) + 2 H(+)(in). Its function is as follows. Na(+)/H(+) antiporter that extrudes sodium in exchange for external protons. This chain is Na(+)/H(+) antiporter NhaA 1, found in Syntrophotalea carbinolica (strain DSM 2380 / NBRC 103641 / GraBd1) (Pelobacter carbinolicus).